Here is a 289-residue protein sequence, read N- to C-terminus: MFEGVIPAMVTPFKEDFSVDYEGIAKNLDYLEKHVNALVPAGTTGEAATLSYEEHIDVVRYVAETSKLPVIGGAGSNSTREAIWLAKEVEKAGAEAAMLVTPYYNKPNAEGLYQHYKAVASEVSIPIIVYNVPSRTGINTTPELVRRLAEIDNIFGIKEASGNLKQISEIIRTTPDDFVLLSGDDFLTLPILCLGGKGVISVAANVAPHLMKEMYEAFVEGNIERAREMHHRLTPLFDVLFIDTNPIPVKKALQLMGLAAGKPRLPLVELSEEKTQKVKEVLKSLELIS.

Threonine 44 is a binding site for pyruvate. The Proton donor/acceptor role is filled by tyrosine 130. Lysine 158 acts as the Schiff-base intermediate with substrate in catalysis. A pyruvate-binding site is contributed by isoleucine 200.

It belongs to the DapA family. In terms of assembly, homotetramer; dimer of dimers.

The protein localises to the cytoplasm. It catalyses the reaction L-aspartate 4-semialdehyde + pyruvate = (2S,4S)-4-hydroxy-2,3,4,5-tetrahydrodipicolinate + H2O + H(+). It functions in the pathway amino-acid biosynthesis; L-lysine biosynthesis via DAP pathway; (S)-tetrahydrodipicolinate from L-aspartate: step 3/4. Its function is as follows. Catalyzes the condensation of (S)-aspartate-beta-semialdehyde [(S)-ASA] and pyruvate to 4-hydroxy-tetrahydrodipicolinate (HTPA). The protein is 4-hydroxy-tetrahydrodipicolinate synthase of Archaeoglobus fulgidus (strain ATCC 49558 / DSM 4304 / JCM 9628 / NBRC 100126 / VC-16).